We begin with the raw amino-acid sequence, 296 residues long: Protoheme IX farnesyltransferase (296 aa).

The next 9 membrane-spanning stretches (helical) occupy residues 29-49 (LSGLVIVTSAGGLALAPGHVA), 54-74 (ALTVLATAAVVGAANALNCWM), 98-118 (FTALGLGIMVPVFALPVLALV), 121-141 (PLTAALAFVALVTYVAVYTPM), 147-167 (LALLVGAVPGAIPPLMGWTAA), 175-195 (GLALFALLFAWQLPHFLAVSI), 221-241 (WIAATAAALVPVSLLLVPLRV), 246-266 (YGAVAAVLGVALAGYAFAGVG), and 275-295 (NFFLATILYLTLLFVALFLGA).

This sequence belongs to the UbiA prenyltransferase family. Protoheme IX farnesyltransferase subfamily.

Its subcellular location is the cell inner membrane. The catalysed reaction is heme b + (2E,6E)-farnesyl diphosphate + H2O = Fe(II)-heme o + diphosphate. Its pathway is porphyrin-containing compound metabolism; heme O biosynthesis; heme O from protoheme: step 1/1. Functionally, converts heme B (protoheme IX) to heme O by substitution of the vinyl group on carbon 2 of heme B porphyrin ring with a hydroxyethyl farnesyl side group. The polypeptide is Protoheme IX farnesyltransferase (Anaeromyxobacter sp. (strain Fw109-5)).